The chain runs to 209 residues: MKNPIINNIPCVLLAGGKSSRFIINNIPINKALMPLKSYPSLLEYQYTRLLKLFKQVIISAKKSYELNAPYLLEKEGGLFSPLFGIHNAFLTLQTPYIFFIAIDTPLVSFESIKILCGIQNFSVVYAKSPTKEHYLISLWHQSILNALNYTLKTQNYRLSDLIKNASSTAIHFDKEEEFLNLNTLKDYELAVQILKEGSNGRRRKDRTP.

Residues 14–16, lysine 31, and aspartate 104 contribute to the GTP site; that span reads LAG. Aspartate 104 provides a ligand contact to Mg(2+).

This sequence belongs to the MobA family. As to quaternary structure, monomer. Mg(2+) is required as a cofactor.

The protein localises to the cytoplasm. It catalyses the reaction Mo-molybdopterin + GTP + H(+) = Mo-molybdopterin guanine dinucleotide + diphosphate. Its function is as follows. Transfers a GMP moiety from GTP to Mo-molybdopterin (Mo-MPT) cofactor (Moco or molybdenum cofactor) to form Mo-molybdopterin guanine dinucleotide (Mo-MGD) cofactor. The chain is Molybdenum cofactor guanylyltransferase from Helicobacter pylori (strain J99 / ATCC 700824) (Campylobacter pylori J99).